The following is a 266-amino-acid chain: Short-chain dehydrogenase/reductase atnB (266 aa).

NADP(+) is bound by residues Ile13, Asp57, and Asn85. Catalysis depends on proton donor residues Ser147 and Tyr166. Residues Tyr166, Lys170, Val199, and Thr201 each coordinate NADP(+). Catalysis depends on Lys170, which acts as the Lowers pKa of active site Tyr.

This sequence belongs to the short-chain dehydrogenases/reductases (SDR) family.

Its pathway is secondary metabolite biosynthesis; terpenoid biosynthesis. Its function is as follows. Short-chain dehydrogenase/reductase; part of the gene cluster that mediates the biosynthesis of the meroterpenoids arthripenoids. The pathway begins with the HR-PKS atnH that catalyzes two chain-extension steps to form a reduced triketide, which then primes the SAT domain in the NR-PKS atnG to initiate three more cycles of extension to give a linear hexaketide corresponding to the polyketide part of arthripenoids. The FAD-dependent monooxygenase atnJ then performs an oxidative decarboxylation at C11 of the atnH/atnG product, via an electrophilic aromatic hydroxylation with concomitant ipso-decarboxylation. The membrane-bound polyprenyl transferase atnF then introduces a farnesyl group before the FAD-dependent monooxygenase atnK functions as the first epoxidase on terminal C12'-C13' olefin, followed by a second epoxidation on C7'-C8' catalyzed by atnA. The terpene cyclase/mutase atnI then initiates the sequential tricyclic ring formation through protonation of the terminal epoxide and catalyzes the regioselective and stereoselective 6/6/6-tricyclic ring formation. The cytochrome P450 monooxygenase atnM is responsible for hydroxylating both C1' and C10'. The next steps may involve ketoreduction and acetyl transfer by the ketoreductase atnB and the acetyltransferase atnC, and lead to the production of arthripenoid B, the final biosynthetic product of the atn cluster. The hydroquinone moiety in arthripenoid B is prone to undergo spontaneous oxidation to afford a benzoquinone compound, a key intermediate for generating structure diversity. For instance, addition of a cysteine followed by ring contraction gives arthripenoid A, tautomerization gives the main product arthripenoid C, addition of a molecular of water or amine affords arthripenoid D or E, respectively, and loss of one water forms arthripenoid F. The sequence is that of Short-chain dehydrogenase/reductase atnB from Arthrinium sp.